A 109-amino-acid chain; its full sequence is A-type ATP synthase subunit F (109 aa).

This sequence belongs to the V-ATPase F subunit family. As to quaternary structure, has multiple subunits with at least A(3), B(3), C, D, E, F, H, I and proteolipid K(x).

The protein resides in the cell membrane. Functionally, component of the A-type ATP synthase that produces ATP from ADP in the presence of a proton gradient across the membrane. This Halorubrum lacusprofundi (strain ATCC 49239 / DSM 5036 / JCM 8891 / ACAM 34) protein is A-type ATP synthase subunit F.